The following is a 274-amino-acid chain: Reaction center protein L chain (274 aa).

Residues 2 to 32 lie on the Cytoplasmic side of the membrane; sequence ALLSFERKYRVRGGTLIGGDLFDFWVGPYFV. Residues 33-53 traverse the membrane as a helical segment; sequence GFFGVSAIFFIFLGVSLIGYA. Residues 54-83 lie on the Periplasmic side of the membrane; it reads ASQGPTWDPFAISINPPDLKYGLGAAPLLE. A helical transmembrane segment spans residues 84–111; sequence GGFWQAITVCALGAFISWMLREVEISRK. Residues 112 to 115 are Cytoplasmic-facing; the sequence is LGIG. The helical transmembrane segment at 116–139 threads the bilayer; sequence WHVPLAFCVPIFMFCVLQVFRPLL. Residues 140–170 lie on the Periplasmic side of the membrane; that stretch reads LGSWGHAFPYGILSHLDWVNNFGYQYLNWHY. Positions 154 and 174 each coordinate (7R,8Z)-bacteriochlorophyll b. The chain crosses the membrane as a helical span at residues 171-198; it reads NPGHMSSVSFLFVNAMALGLHGGLILSV. H191 is a binding site for Fe cation. Topologically, residues 199 to 225 are cytoplasmic; the sequence is ANPGDGDKVKTAEHENQYFRDVVGYSI. A ubiquinone is bound at residue F217. The chain crosses the membrane as a helical span at residues 226–249; the sequence is GALSIHRLGLFLASNIFLTGAFGT. Position 231 (H231) interacts with Fe cation. The Periplasmic portion of the chain corresponds to 250–274; sequence IASGPFWTRGWPEWWGWWLDIPFWS.

The protein belongs to the reaction center PufL/M/PsbA/D family. Reaction center is composed of four bacteriochlorophylls, two bacteriopheophytins, two ubiquinones, one iron, and three highly hydrophobic polypeptide chains (designated L, M, and H).

It localises to the cellular chromatophore membrane. Functionally, the reaction center is a membrane-bound complex that mediates the initial photochemical event in the electron transfer process of photosynthesis. This is Reaction center protein L chain (pufL) from Blastochloris viridis (Rhodopseudomonas viridis).